The following is a 206-amino-acid chain: Glycerol-3-phosphate acyltransferase (206 aa).

Helical transmembrane passes span 6 to 26 (IFLA…PSGF), 57 to 77 (KAAL…ILIA), 86 to 106 (FHVI…WLNW), 118 to 138 (VFLG…MAVL), 143 to 163 (IVSL…FLSL), and 165 to 185 (EASF…MVLW).

Belongs to the PlsY family. As to quaternary structure, probably interacts with PlsX.

Its subcellular location is the cell inner membrane. The enzyme catalyses an acyl phosphate + sn-glycerol 3-phosphate = a 1-acyl-sn-glycero-3-phosphate + phosphate. The protein operates within lipid metabolism; phospholipid metabolism. In terms of biological role, catalyzes the transfer of an acyl group from acyl-phosphate (acyl-PO(4)) to glycerol-3-phosphate (G3P) to form lysophosphatidic acid (LPA). This enzyme utilizes acyl-phosphate as fatty acyl donor, but not acyl-CoA or acyl-ACP. The protein is Glycerol-3-phosphate acyltransferase of Prochlorococcus marinus (strain MIT 9211).